Consider the following 368-residue polypeptide: MSVAGLKKQFYKASQLVSEKVGGAEGTKLDDDFREMEKKVDITSKAVAEVLVRTIEYLQPNPASRAKLTMLNTVSKIRGQVKNPGYPQSEGLLGECMVRHGKELGGESNFGDALLDAGESMKRLAEVKDSLDIEVKQNFIDPLQNLCDKDLKEIQHHLKKLEGRRLDFDYKKKRQGKIPDEELRQALEKFEESKEVAETSMHNLLETDIEQVSQLSALVDAQLDYHRQAVQILEELADKLKRRVREASSRPRREFKPRPQEPFELGELEQPNGGFPCASAPKITASSSFRSGDKPTRTPSKSMPPLDQPSCKALYDFEPENDGELGFREGDLITLTNQIDENWYEGMLHGQSGFFPLSYVQVLVPLPQ.

The membrane-binding amphipathic helix stretch occupies residues 1 to 21 (MSVAGLKKQFYKASQLVSEKV). The 232-residue stretch at 18 to 249 (SEKVGGAEGT…LKRRVREASS (232 aa)) folds into the BAR domain. Residues 60 to 87 (PNPASRAKLTMLNTVSKIRGQVKNPGYP) form a required for dimerization upon membrane association region. Positions 180–250 (DEELRQALEK…KRRVREASSR (71 aa)) form a coiled coil. The interaction with ARC stretch occupies residues 218-254 (LVDAQLDYHRQAVQILEELADKLKRRVREASSRPRRE). Positions 243-309 (RVREASSRPR…SKSMPPLDQP (67 aa)) are disordered. Positions 245–261 (REASSRPRREFKPRPQE) are enriched in basic and acidic residues. Ser288 bears the Phosphoserine mark. Thr298 carries the post-translational modification Phosphothreonine. Residues 306 to 365 (LDQPSCKALYDFEPENDGELGFREGDLITLTNQIDENWYEGMLHGQSGFFPLSYVQVLVP) enclose the SH3 domain. Tyr315 carries the post-translational modification Phosphotyrosine.

It belongs to the endophilin family. Interacts with ARC, SYNJ1 and DNM1. Interacts with PDCD6IP. Interacts with BIN2. In terms of tissue distribution, detected in brain and testis (at protein level). Ubiquitous.

It is found in the cytoplasm. The protein resides in the early endosome membrane. It localises to the cell projection. The protein localises to the podosome. In terms of biological role, implicated in endocytosis. May recruit other proteins to membranes with high curvature. The protein is Endophilin-A2 (Sh3gl1) of Rattus norvegicus (Rat).